Consider the following 276-residue polypeptide: Formamidopyrimidine-DNA glycosylase (276 aa).

Pro2 (schiff-base intermediate with DNA) is an active-site residue. The active-site Proton donor is the Glu3. The active-site Proton donor; for beta-elimination activity is Lys58. The DNA site is built by His92, Arg111, and Lys154. The segment at 239-273 (QVYGHAGEECSSCGTILEKIKVNGRGTTFCPHCQV) adopts an FPG-type zinc-finger fold. Arg263 serves as the catalytic Proton donor; for delta-elimination activity.

This sequence belongs to the FPG family. In terms of assembly, monomer. Zn(2+) serves as cofactor.

The catalysed reaction is Hydrolysis of DNA containing ring-opened 7-methylguanine residues, releasing 2,6-diamino-4-hydroxy-5-(N-methyl)formamidopyrimidine.. The enzyme catalyses 2'-deoxyribonucleotide-(2'-deoxyribose 5'-phosphate)-2'-deoxyribonucleotide-DNA = a 3'-end 2'-deoxyribonucleotide-(2,3-dehydro-2,3-deoxyribose 5'-phosphate)-DNA + a 5'-end 5'-phospho-2'-deoxyribonucleoside-DNA + H(+). Functionally, involved in base excision repair of DNA damaged by oxidation or by mutagenic agents. Acts as a DNA glycosylase that recognizes and removes damaged bases. Has a preference for oxidized purines, such as 7,8-dihydro-8-oxoguanine (8-oxoG). Has AP (apurinic/apyrimidinic) lyase activity and introduces nicks in the DNA strand. Cleaves the DNA backbone by beta-delta elimination to generate a single-strand break at the site of the removed base with both 3'- and 5'-phosphates. This chain is Formamidopyrimidine-DNA glycosylase, found in Lactobacillus gasseri (strain ATCC 33323 / DSM 20243 / BCRC 14619 / CIP 102991 / JCM 1131 / KCTC 3163 / NCIMB 11718 / NCTC 13722 / AM63).